We begin with the raw amino-acid sequence, 358 residues long: MEPLHARYPFLARSREAVEAAAVDLGEIVATDETVTARALERVESAITDGTVGEPHRRTRVELLSYPVARVLVSLVDVHICTRKYAQAEAEAAYDRFTEEFATTTELKSTQRETLDRTELLGEFDLASAVSDAGDGYRVEVGAYLDLAADQRGDSWRLVNRPLTDGEVRVTAEELNVLLKQAIRHRVTDGLPFTVPDAIADELTAEVEQLEEVLSELELTREIDTVVPELFPPCMKSLLDQVQKGEHLEHHSRFAIATFLVGIGMTTDEIVDLFQVNPGFGEEATRYQVDHIRGDTSPTEYSTPACSTMQSYGDCVNMDDLCEAISHPMGYYEQKLDDTDEEELVDWREDEGEEEADA.

Residues cysteine 234, cysteine 306, cysteine 315, and cysteine 322 each coordinate [4Fe-4S] cluster. Residues 335-358 form a disordered region; that stretch reads KLDDTDEEELVDWREDEGEEEADA. Positions 338-358 are enriched in acidic residues; that stretch reads DTDEEELVDWREDEGEEEADA.

This sequence belongs to the eukaryotic-type primase large subunit family. Heterodimer of a small subunit (PriS) and a large subunit (PriL). Requires [4Fe-4S] cluster as cofactor.

Regulatory subunit of DNA primase, an RNA polymerase that catalyzes the synthesis of short RNA molecules used as primers for DNA polymerase during DNA replication. Stabilizes and modulates the activity of the small subunit, increasing the rate of DNA synthesis, and conferring RNA synthesis capability. The DNA polymerase activity may enable DNA primase to also catalyze primer extension after primer synthesis. May also play a role in DNA repair. This is DNA primase large subunit PriL from Haloarcula marismortui (strain ATCC 43049 / DSM 3752 / JCM 8966 / VKM B-1809) (Halobacterium marismortui).